We begin with the raw amino-acid sequence, 45 residues long: uncharacterized protein (45 aa).

It belongs to the asfivirus C62L family.

This is an uncharacterized protein from Ornithodoros (relapsing fever ticks).